A 613-amino-acid chain; its full sequence is Metacaspase-1 (613 aa).

Catalysis depends on residues His404 and Cys460.

The protein belongs to the peptidase C14B family. In terms of assembly, monomer.

Activated by Ca(2+). In terms of biological role, cysteine protease that cleaves specifically after arginine or lysine residues. May play a role in apoptosis. In Plasmodium falciparum (isolate 3D7), this protein is Metacaspase-1.